Here is a 137-residue protein sequence, read N- to C-terminus: Major seminal plasma glycoprotein PSP-II (137 aa).

Positions 1-21 (MKLGTAIPWALLLSTATLVST) are cleaved as a signal peptide. Cystine bridges form between cysteine 30–cysteine 51 and cysteine 74–cysteine 95. The 102-residue stretch at 30 to 131 (CGRVIKDTSG…SPFLIYFYGS (102 aa)) folds into the CUB domain. Asparagine 119 carries N-linked (GlcNAc...) (complex) asparagine glycosylation.

In terms of assembly, monomer or heterodimer with PSP-I (depending on the type of glycosylation of PSP-I). Seminal plasma or sperm.

Its subcellular location is the secreted. This Sus scrofa (Pig) protein is Major seminal plasma glycoprotein PSP-II.